The primary structure comprises 172 residues: Large ribosomal subunit protein bL9 (172 aa).

It belongs to the bacterial ribosomal protein bL9 family.

Its function is as follows. Binds to the 23S rRNA. The sequence is that of Large ribosomal subunit protein bL9 from Chlamydia abortus (strain DSM 27085 / S26/3) (Chlamydophila abortus).